Here is an 845-residue protein sequence, read N- to C-terminus: Protein translocase subunit SecA 1 (845 aa).

ATP contacts are provided by residues glutamine 85, 103-107 (GEGKT), and aspartate 492.

This sequence belongs to the SecA family. Monomer and homodimer. Part of the essential Sec protein translocation apparatus which comprises SecA, SecYEG and auxiliary proteins SecDF. Other proteins may also be involved.

Its subcellular location is the cell membrane. The protein resides in the cytoplasm. It catalyses the reaction ATP + H2O + cellular proteinSide 1 = ADP + phosphate + cellular proteinSide 2.. In terms of biological role, part of the Sec protein translocase complex. Interacts with the SecYEG preprotein conducting channel. Has a central role in coupling the hydrolysis of ATP to the transfer of proteins into and across the cell membrane, serving as an ATP-driven molecular motor driving the stepwise translocation of polypeptide chains across the membrane. This chain is Protein translocase subunit SecA 1, found in Corynebacterium efficiens (strain DSM 44549 / YS-314 / AJ 12310 / JCM 11189 / NBRC 100395).